The sequence spans 343 residues: N-acetyl-gamma-glutamyl-phosphate reductase (343 aa).

Cysteine 146 is an active-site residue.

Belongs to the NAGSA dehydrogenase family. Type 1 subfamily.

The protein resides in the cytoplasm. The enzyme catalyses N-acetyl-L-glutamate 5-semialdehyde + phosphate + NADP(+) = N-acetyl-L-glutamyl 5-phosphate + NADPH + H(+). Its pathway is amino-acid biosynthesis; L-arginine biosynthesis; N(2)-acetyl-L-ornithine from L-glutamate: step 3/4. In terms of biological role, catalyzes the NADPH-dependent reduction of N-acetyl-5-glutamyl phosphate to yield N-acetyl-L-glutamate 5-semialdehyde. The chain is N-acetyl-gamma-glutamyl-phosphate reductase from Acidothermus cellulolyticus (strain ATCC 43068 / DSM 8971 / 11B).